The primary structure comprises 493 residues: Putative BTB/POZ domain-containing protein L35 (493 aa).

A BTB domain is found at 16–87 (TDLKLTLVDD…YLVDNKSEVD (72 aa)).

This sequence belongs to the mimivirus BTB/WD family.

This chain is Putative BTB/POZ domain-containing protein L35, found in Acanthamoeba polyphaga (Amoeba).